A 512-amino-acid chain; its full sequence is cAMP-dependent protein kinase catalytic subunit (512 aa).

A compositionally biased stretch (polar residues) spans 1 to 15; sequence MDTTAVASKGSTNVG. 2 disordered regions span residues 1-79 and 118-166; these read MDTT…SSLW and IDNL…GLRD. Positions 16-27 are enriched in low complexity; it reads SSTDTLSTSASL. 2 stretches are compositionally biased toward polar residues: residues 32 to 52 and 62 to 79; these read NAGS…SFNG and SDAS…SSLW. Positions 143–166 are enriched in basic and acidic residues; the sequence is SRDGRGELGSEHGERRSAMDGLRD. The region spanning 201–456 is the Protein kinase domain; it reads FNFLQTLGTG…SMDIIMHPWF (256 aa). ATP contacts are provided by residues 207–215 and Lys230; that span reads LGTGSFGRV. Asp324 functions as the Proton acceptor in the catalytic mechanism. The residue at position 356 (Thr356) is a Phosphothreonine. Positions 457 to 512 constitute an AGC-kinase C-terminal domain; the sequence is RDISWDKILTRKIEVPYVPPIQAGMGDSSQFDAYADVATDYGTSEDPEFTSIFKDF.

It belongs to the protein kinase superfamily. AGC Ser/Thr protein kinase family. cAMP subfamily.

It catalyses the reaction L-seryl-[protein] + ATP = O-phospho-L-seryl-[protein] + ADP + H(+). The enzyme catalyses L-threonyl-[protein] + ATP = O-phospho-L-threonyl-[protein] + ADP + H(+). Its activity is regulated as follows. Activated by cAMP. This Schizosaccharomyces pombe (strain 972 / ATCC 24843) (Fission yeast) protein is cAMP-dependent protein kinase catalytic subunit (pka1).